Consider the following 851-residue polypeptide: Putative serine/threonine-protein kinase 019R (851 aa).

Disordered regions lie at residues 1–24 (MATN…RTIK), 61–91 (PRVA…RGGP), 104–160 (GGAS…KRGG), 190–216 (GLSP…ARRS), and 340–400 (SRPS…GEPR). Residues 125–141 (ARRQSPAEAAEASPCPE) show a composition bias toward low complexity. Over residues 196-216 (SHMRKSPARRSPARRSPARRS) the composition is skewed to basic residues. The span at 340–366 (SRPSGVSRTSGTSGSSGSSASSRPPNS) shows a compositional bias: low complexity. The 396-residue stretch at 456–851 (AVSDNVIGQG…GEREIESFTM (396 aa)) folds into the Protein kinase domain. ATP-binding positions include 462–470 (IGQGSWGSV) and lysine 485. The Proton acceptor role is filled by aspartate 608.

Belongs to the protein kinase superfamily. Ser/Thr protein kinase family.

The catalysed reaction is L-seryl-[protein] + ATP = O-phospho-L-seryl-[protein] + ADP + H(+). The enzyme catalyses L-threonyl-[protein] + ATP = O-phospho-L-threonyl-[protein] + ADP + H(+). The sequence is that of Putative serine/threonine-protein kinase 019R from Dryophytes versicolor (chameleon treefrog).